A 415-amino-acid chain; its full sequence is Secernin-2 (415 aa).

Cys-8 is a catalytic residue.

This sequence belongs to the peptidase C69 family. Secernin subfamily.

This is Secernin-2 (scrn2) from Danio rerio (Zebrafish).